A 331-amino-acid polypeptide reads, in one-letter code: UPF0324 membrane protein SACOL0411 (331 aa).

11 helical membrane-spanning segments follow: residues 9-26, 31-48, 69-88, 93-115, 122-144, 154-176, 183-202, 217-234, 247-269, 273-295, and 308-330; these read FMIGLSLTFIVALFSFLA, ILDKVGALTIAILIAILY, LLRFAIILYGLKLNIFDIIG, LLAIDVGVVIFSIVMMLFVNKLL, ALLLGVGTGVCGAAAIAAVAPIF, SIGIIALIGTIFSLIYTAIYAIF, YGAWSGVSLHEIAHVVLAGG, LGRVFLLIPLTIVLILIM, ISIPYFLIGFVIMALVNTYVTIP, LNILNTVSTICLLMAMVALGLNV, and LMTIIITSICLSSLAFIVVHWLY.

It belongs to the UPF0324 family.

The protein resides in the cell membrane. This chain is UPF0324 membrane protein SACOL0411, found in Staphylococcus aureus (strain COL).